Reading from the N-terminus, the 165-residue chain is Phosphopantetheine adenylyltransferase (165 aa).

S10 contacts substrate. Residues 10–11 (SF) and H18 contribute to the ATP site. Substrate-binding residues include K42, T79, and R93. ATP is bound by residues 94 to 96 (GLR), E104, and 129 to 135 (VRPITAT).

This sequence belongs to the bacterial CoaD family. As to quaternary structure, homohexamer. It depends on Mg(2+) as a cofactor.

The protein localises to the cytoplasm. It catalyses the reaction (R)-4'-phosphopantetheine + ATP + H(+) = 3'-dephospho-CoA + diphosphate. Its pathway is cofactor biosynthesis; coenzyme A biosynthesis; CoA from (R)-pantothenate: step 4/5. Functionally, reversibly transfers an adenylyl group from ATP to 4'-phosphopantetheine, yielding dephospho-CoA (dPCoA) and pyrophosphate. This chain is Phosphopantetheine adenylyltransferase, found in Rhodopseudomonas palustris (strain BisB5).